Reading from the N-terminus, the 249-residue chain is DNA repair protein RecO (249 aa).

Belongs to the RecO family.

Involved in DNA repair and RecF pathway recombination. This is DNA repair protein RecO from Leptospira biflexa serovar Patoc (strain Patoc 1 / Ames).